Here is a 225-residue protein sequence, read N- to C-terminus: UPF0758 protein Spea_3837 (225 aa).

Residues 102-224 (ILSDPDLTRD…IVSFAERGWI (123 aa)) enclose the MPN domain. Positions 173, 175, and 186 each coordinate Zn(2+). Positions 173-186 (HNHPSGIAEPSTAD) match the JAMM motif motif.

This sequence belongs to the UPF0758 family.

The sequence is that of UPF0758 protein Spea_3837 from Shewanella pealeana (strain ATCC 700345 / ANG-SQ1).